Here is a 360-residue protein sequence, read N- to C-terminus: Phospho-N-acetylmuramoyl-pentapeptide-transferase (360 aa).

10 helical membrane passes run 26–46 (AILSVLTALGLSLWMGPIMIK), 70–90 (GTPTMGGIMILAAISITILLW), 94–114 (SNPYVWAVLTVLLGYGAIGFV), 132–152 (WKYFWQSLIAFVVAFALYAYG), 168–188 (IMPQLGLMYIILTYFVIVGTS), 199–219 (GLAIMPTVLVAAGFAVIAWAT), 236–256 (ASELVVVCTAIVGAGLGFLWF), 263–283 (VFMGDVGSLALGGALGTIAVL), 288–308 (LILVIMGGVFVMETLSVILQV), and 338–358 (VIVRFWIISMVLVLIGLATLK).

It belongs to the glycosyltransferase 4 family. MraY subfamily. Requires Mg(2+) as cofactor.

The protein resides in the cell inner membrane. It catalyses the reaction UDP-N-acetyl-alpha-D-muramoyl-L-alanyl-gamma-D-glutamyl-meso-2,6-diaminopimeloyl-D-alanyl-D-alanine + di-trans,octa-cis-undecaprenyl phosphate = di-trans,octa-cis-undecaprenyl diphospho-N-acetyl-alpha-D-muramoyl-L-alanyl-D-glutamyl-meso-2,6-diaminopimeloyl-D-alanyl-D-alanine + UMP. Its pathway is cell wall biogenesis; peptidoglycan biosynthesis. Catalyzes the initial step of the lipid cycle reactions in the biosynthesis of the cell wall peptidoglycan: transfers peptidoglycan precursor phospho-MurNAc-pentapeptide from UDP-MurNAc-pentapeptide onto the lipid carrier undecaprenyl phosphate, yielding undecaprenyl-pyrophosphoryl-MurNAc-pentapeptide, known as lipid I. The polypeptide is Phospho-N-acetylmuramoyl-pentapeptide-transferase (Vibrio campbellii (strain ATCC BAA-1116)).